Consider the following 271-residue polypeptide: 4-diphosphocytidyl-2-C-methyl-D-erythritol kinase (271 aa).

Lys8 is a catalytic residue. Residue Pro90–Ala100 coordinates ATP. Residue Asp132 is part of the active site.

This sequence belongs to the GHMP kinase family. IspE subfamily.

It catalyses the reaction 4-CDP-2-C-methyl-D-erythritol + ATP = 4-CDP-2-C-methyl-D-erythritol 2-phosphate + ADP + H(+). It participates in isoprenoid biosynthesis; isopentenyl diphosphate biosynthesis via DXP pathway; isopentenyl diphosphate from 1-deoxy-D-xylulose 5-phosphate: step 3/6. Functionally, catalyzes the phosphorylation of the position 2 hydroxy group of 4-diphosphocytidyl-2C-methyl-D-erythritol. This chain is 4-diphosphocytidyl-2-C-methyl-D-erythritol kinase, found in Parabacteroides distasonis (strain ATCC 8503 / DSM 20701 / CIP 104284 / JCM 5825 / NCTC 11152).